We begin with the raw amino-acid sequence, 702 residues long: Elongation factor G (702 aa).

The region spanning 8–290 is the tr-type G domain; the sequence is ERYRNIGISA…AVIEYLPAPT (283 aa). GTP is bound by residues 17-24, 88-92, and 142-145; these read AHIDAGKT, DTPGH, and NKMD.

It belongs to the TRAFAC class translation factor GTPase superfamily. Classic translation factor GTPase family. EF-G/EF-2 subfamily.

Its subcellular location is the cytoplasm. Functionally, catalyzes the GTP-dependent ribosomal translocation step during translation elongation. During this step, the ribosome changes from the pre-translocational (PRE) to the post-translocational (POST) state as the newly formed A-site-bound peptidyl-tRNA and P-site-bound deacylated tRNA move to the P and E sites, respectively. Catalyzes the coordinated movement of the two tRNA molecules, the mRNA and conformational changes in the ribosome. The protein is Elongation factor G of Yersinia pseudotuberculosis serotype O:1b (strain IP 31758).